The following is a 65-amino-acid chain: Temporin-SN1 (65 aa).

Residues 1–22 form the signal peptide; the sequence is MFTTKKSLLLLFFLGTINLSLC. A propeptide spans 23–44 (removed in mature form); sequence QEERNAEEERRDGDDEGGVEVQ. A Lysine amide modification is found at Lys65.

It belongs to the frog skin active peptide (FSAP) family. Temporin subfamily. In terms of tissue distribution, expressed by the skin glands.

It localises to the secreted. Its function is as follows. Antimicrobial peptide. Active against a variety of Gram-positive bacterial strains. Not active against Gram-negative bacteria and against fungi. Shows hemolytic activity against human erythrocytes. This is Temporin-SN1 from Sylvirana spinulosa (Fine-spined frog).